The chain runs to 419 residues: G protein-activated inward rectifier potassium channel 4 (419 aa).

Residues 1–86 lie on the Cytoplasmic side of the membrane; it reads MAGDSRNAMN…LFTTLVDLKW (86 aa). At serine 5 the chain carries Phosphoserine. A helical membrane pass occupies residues 87-111; it reads RFNLLVFTMVYTITWLFFGFIWWLI. The Extracellular segment spans residues 112–135; it reads AYVRGDLDHVGDQEWIPCVENLSG. The helical; Pore-forming intramembrane region spans 136-147; it reads FVSAFLFSIETE. An intramembrane region (pore-forming) is located at residues 148-154; it reads TTIGYGF. The Selectivity filter signature appears at 149–154; that stretch reads TIGYGF. Over 155-163 the chain is Extracellular; that stretch reads RVITEKCPE. The helical transmembrane segment at 164 to 185 threads the bilayer; sequence GIILLLVQAILGSIVNAFMVGC. At 186-419 the chain is on the cytoplasmic side; sequence MFVKISQPKK…SVSRATRGSM (234 aa). The segment covering 380-390 has biased composition (low complexity); the sequence is LPSPPLLGGCA. The interval 380–419 is disordered; it reads LPSPPLLGGCAEAEKEAEAEHDEEEEPNGLSVSRATRGSM. Residues 409 to 419 show a composition bias toward polar residues; the sequence is LSVSRATRGSM.

This sequence belongs to the inward rectifier-type potassium channel (TC 1.A.2.1) family. KCNJ5 subfamily. As to quaternary structure, associates with KCNJ3/GIRK1 or KCNJ6/GRIK2 to form a G-protein-activated heteromultimer pore-forming unit. The resulting inward current is much larger. Most abundant in heart tissue where it is found predominantly in atria. Also found in brain, kidney, liver, spleen, lung and thymus.

The protein localises to the membrane. The catalysed reaction is K(+)(in) = K(+)(out). Heteromultimer composed of KCNJ3/GIRK1 and KCNJ5/GIRK4 is activated by phosphatidylinositol 4,5 biphosphate (PtdIns(4,5)P2). In terms of biological role, inward rectifier potassium channels are characterized by a greater tendency to allow potassium to flow into the cell rather than out of it. Their voltage dependence is regulated by the concentration of extracellular potassium; as external potassium is raised, the voltage range of the channel opening shifts to more positive voltages. The inward rectification is mainly due to the blockage of outward current by internal magnesium. Can be blocked by external barium. This potassium channel is controlled by G proteins. In Rattus norvegicus (Rat), this protein is G protein-activated inward rectifier potassium channel 4 (Kcnj5).